Reading from the N-terminus, the 478-residue chain is H(+)/Cl(-) exchange transporter ClcA (478 aa).

Over 1-32 (MTHSTQQLSPEGVAEGKRGRLIRELVNRDKTP) the chain is Cytoplasmic. The helical transmembrane segment at 33 to 69 (LIILIMAAVVGVVTGLLGVAFDRGVDWVQQQRLLALA) threads the bilayer. Residues 70-76 (NVADSAL) lie on the Periplasmic side of the membrane. The chain crosses the membrane as a helical span at residues 77–100 (LVWPLAFIMSALLAMMGYFLVSRF). Positions 106 to 110 (GSGIP) match the Selectivity filter part_1 motif. Serine 107 contacts chloride. Residues 109-116 (IPEIEGAM) constitute an intramembrane region (helical). Residues 117-123 (EEMRPVR) are Cytoplasmic-facing. Transmembrane regions (helical) follow at residues 124–141 (WWRV…TLGA) and 148–166 (EGPM…VDIF). The Selectivity filter part_2 signature appears at 146–150 (GREGP). The Cytoplasmic portion of the chain corresponds to 167–176 (RLRSPEARHS). 2 intramembrane regions (helical) span residues 177 to 189 (LLAT…LSAA) and 193 to 201 (PLAGILFVI). Residues 202-214 (EEMRSQFRYSLVS) lie on the Cytoplasmic side of the membrane. Residues 215–232 (IKAVFIGVITSTIVYRYF) form a helical membrane-spanning segment. Over 233-252 (NGERAIIEVGKLSDAPLNTL) the chain is Periplasmic. The helical transmembrane segment at 253–281 (WLYLLLGIIFGAVGVIFNALIFRTQDMFV) threads the bilayer. Residues 282–287 (RFHGGD) are Cytoplasmic-facing. Residues 288-309 (WRKLVLIGGLLGGMCGLLALLH) traverse the membrane as a helical segment. At 310–329 (GNAVGGGFALIPIAAAGNFS) the chain is on the periplasmic side. A run of 2 helical transmembrane segments spans residues 330–349 (IGML…LCFG) and 355–376 (GIFA…LSCA). The short motif at 355–359 (GIFAP) is the Selectivity filter part_3 element. 2 residues coordinate chloride: isoleucine 356 and phenylalanine 357. The Periplasmic segment spans residues 377-386 (HFFPQYGIEA). The segment at residues 387–401 (GTFAIAGMGALFAAS) is an intramembrane region (helical). Residues 402–404 (VRA) constitute an intramembrane region (note=Loop between two helices). Positions 405–416 (PLTGIVLVLEMT) form an intramembrane region, helical. Residues 417 to 421 (DNYQL) constitute an intramembrane region (note=Loop between two helices). Residues 422 to 438 (ILPMIVTCLGATLIAQF) traverse the membrane as a helical segment. Over 439-478 (MGGKPLYSAILARTLAKQEQARATVIAQEPAVENTPQTGR) the chain is Cytoplasmic. Tyrosine 445 serves as a coordination point for chloride.

This sequence belongs to the chloride channel (TC 2.A.49) family. ClcA subfamily. In terms of assembly, homodimer.

Its subcellular location is the cell inner membrane. It catalyses the reaction 2 chloride(in) + H(+)(out) = 2 chloride(out) + H(+)(in). Proton-coupled chloride transporter. Functions as antiport system and exchanges two chloride ions for 1 proton. Probably acts as an electrical shunt for an outwardly-directed proton pump that is linked to amino acid decarboxylation, as part of the extreme acid resistance (XAR) response. The protein is H(+)/Cl(-) exchange transporter ClcA of Yersinia pseudotuberculosis serotype IB (strain PB1/+).